The primary structure comprises 143 residues: Ribonuclease P protein component 2 (143 aa).

Belongs to the eukaryotic/archaeal RNase P protein component 2 family. In terms of assembly, consists of a catalytic RNA component and at least 4-5 protein subunits.

Its subcellular location is the cytoplasm. It carries out the reaction Endonucleolytic cleavage of RNA, removing 5'-extranucleotides from tRNA precursor.. Its function is as follows. Part of ribonuclease P, a protein complex that generates mature tRNA molecules by cleaving their 5'-ends. In Saccharolobus islandicus (strain Y.N.15.51 / Yellowstone #2) (Sulfolobus islandicus), this protein is Ribonuclease P protein component 2.